Here is a 1242-residue protein sequence, read N- to C-terminus: ATP-dependent helicase/nuclease subunit A (1242 aa).

The UvrD-like helicase ATP-binding domain maps to 13-486 (SQWTDDQWKA…IDLAKNFRSR (474 aa)). Residue 34–41 (AAAGSGKT) coordinates ATP. Positions 506-806 (GEIEYDADAE…RIMTIHKSKG (301 aa)) constitute a UvrD-like helicase C-terminal domain.

This sequence belongs to the helicase family. AddA subfamily. As to quaternary structure, heterodimer of AddA and AddB/RexB. Mg(2+) is required as a cofactor.

The enzyme catalyses Couples ATP hydrolysis with the unwinding of duplex DNA by translocating in the 3'-5' direction.. The catalysed reaction is ATP + H2O = ADP + phosphate + H(+). Functionally, the heterodimer acts as both an ATP-dependent DNA helicase and an ATP-dependent, dual-direction single-stranded exonuclease. Recognizes the chi site generating a DNA molecule suitable for the initiation of homologous recombination. The AddA nuclease domain is required for chi fragment generation; this subunit has the helicase and 3' -&gt; 5' nuclease activities. The chain is ATP-dependent helicase/nuclease subunit A from Bacillus cytotoxicus (strain DSM 22905 / CIP 110041 / 391-98 / NVH 391-98).